The chain runs to 557 residues: Low affinity inorganic phosphate transporter 8 (557 aa).

Over 1–20 (MATSHGVLRSLDNAKTQSYH) the chain is Cytoplasmic. The helical transmembrane segment at 21-41 (YLAIVIAGMGFFTDAYDLFCI) threads the bilayer. Over 42-70 (TAVTKLIGRLYYSDPTNHSPGILPTNVNN) the chain is Extracellular. Residues 71–91 (AITGVALCGTLAGQLFFGWLG) form a helical membrane-spanning segment. At 92–98 (DKLGRKK) the chain is on the cytoplasmic side. Residues 99–119 (VYGITLTTMVGFALLSGLSFG) traverse the membrane as a helical segment. Over 120–130 (STPKTVVTSLC) the chain is Extracellular. The helical transmembrane segment at 131–151 (FFRFWLGFGIGGDYPLSAVIM) threads the bilayer. Residues 152–162 (SEYANQKTRGS) lie on the Cytoplasmic side of the membrane. A helical membrane pass occupies residues 163–183 (FIAAVFAMQGVGILVAGGVAM). Residues 184 to 210 (FVSKLFLLYFPAPDFETDAVLSTQPEG) lie on the Extracellular side of the membrane. Residues 211–231 (DFVWRIVLMFGAVPAALTYYW) traverse the membrane as a helical segment. Residues 232 to 294 (RMKMPETARY…LFSSEFLNRH (63 aa)) lie on the Cytoplasmic side of the membrane. The chain crosses the membrane as a helical span at residues 295–315 (GLHLLGTTSTWFLLDIAFYSL). Residues 316–346 (QLTQKDIYPTSGLVYKASKMNAIEEVFQLSR) are Extracellular-facing. A helical membrane pass occupies residues 347–367 (AMFAVALIATVPGYWCTVFLI). The Cytoplasmic segment spans residues 368 to 369 (EK). The chain crosses the membrane as a helical span at residues 370 to 390 (IGRFRIQLIGFLVMSVCMWFL). At 391-414 (GHNYRSFRGEESACKNGSKYSFCN) the chain is on the extracellular side. N-linked (GlcNAc...) asparagine glycosylation is present at N406. The chain crosses the membrane as a helical span at residues 415-435 (GNPVMFAILFGLTLFFANFGP). At 436 to 457 (NSTTFIVPAELFPARLRSTCHG) the chain is on the cytoplasmic side. A helical membrane pass occupies residues 458-478 (ISAAAGKSGAIVGAFGVQSYI). The Extracellular segment spans residues 479-490 (GNSHDKSKGTKQ). The chain crosses the membrane as a helical span at residues 491–511 (AIMALAVVNLLGFFFTFLVPE). The Cytoplasmic portion of the chain corresponds to 512 to 557 (TQGRSLEEISGEEKDFQGNNADEEISGERNGTRNASVDKSPETSMV). Residues 519 to 557 (EISGEEKDFQGNNADEEISGERNGTRNASVDKSPETSMV) are disordered. Residues 543–557 (TRNASVDKSPETSMV) are compositionally biased toward polar residues.

It belongs to the major facilitator superfamily. Phosphate:H(+) symporter (TC 2.A.1.9) family.

Its subcellular location is the cell membrane. The enzyme catalyses phosphate(in) + H(+)(in) = phosphate(out) + H(+)(out). Functionally, low-affinity transporter for external inorganic phosphate (Pi) that may be involved in the acquisition of phosphate released by arbuscular mycorrhizal (AM) fungi (e.g. Glomus versiforme and G.intraradices) during AM symbiosis; not required for mycorrhizal arbuscule development. The chain is Low affinity inorganic phosphate transporter 8 from Medicago truncatula (Barrel medic).